We begin with the raw amino-acid sequence, 359 residues long: tRNA-specific 2-thiouridylase MnmA (359 aa).

Residues 9–16 and methionine 35 each bind ATP; that span reads GISGGVDS. Residues 95 to 97 are interaction with target base in tRNA; sequence NPD. Cysteine 100 serves as the catalytic Nucleophile. An intrachain disulfide couples cysteine 100 to cysteine 197. ATP is bound at residue glycine 124. The segment at 147 to 149 is interaction with tRNA; it reads KDQ. The Cysteine persulfide intermediate role is filled by cysteine 197. The segment at 309–310 is interaction with tRNA; that stretch reads RY.

This sequence belongs to the MnmA/TRMU family.

The protein resides in the cytoplasm. The enzyme catalyses S-sulfanyl-L-cysteinyl-[protein] + uridine(34) in tRNA + AH2 + ATP = 2-thiouridine(34) in tRNA + L-cysteinyl-[protein] + A + AMP + diphosphate + H(+). In terms of biological role, catalyzes the 2-thiolation of uridine at the wobble position (U34) of tRNA, leading to the formation of s(2)U34. This chain is tRNA-specific 2-thiouridylase MnmA, found in Francisella tularensis subsp. tularensis (strain FSC 198).